A 668-amino-acid chain; its full sequence is tRNA 5-methylaminomethyl-2-thiouridine biosynthesis bifunctional protein MnmC (668 aa).

Residues 1-245 (MKHYSIQPAN…KREMLCGVME (245 aa)) are tRNA (mnm(5)s(2)U34)-methyltransferase. The segment at 270–668 (IGGGIASALL…LLKGKAVKAG (399 aa)) is FAD-dependent cmnm(5)s(2)U34 oxidoreductase.

The protein in the N-terminal section; belongs to the methyltransferase superfamily. tRNA (mnm(5)s(2)U34)-methyltransferase family. In the C-terminal section; belongs to the DAO family. FAD serves as cofactor.

The protein resides in the cytoplasm. It carries out the reaction 5-aminomethyl-2-thiouridine(34) in tRNA + S-adenosyl-L-methionine = 5-methylaminomethyl-2-thiouridine(34) in tRNA + S-adenosyl-L-homocysteine + H(+). Catalyzes the last two steps in the biosynthesis of 5-methylaminomethyl-2-thiouridine (mnm(5)s(2)U) at the wobble position (U34) in tRNA. Catalyzes the FAD-dependent demodification of cmnm(5)s(2)U34 to nm(5)s(2)U34, followed by the transfer of a methyl group from S-adenosyl-L-methionine to nm(5)s(2)U34, to form mnm(5)s(2)U34. The protein is tRNA 5-methylaminomethyl-2-thiouridine biosynthesis bifunctional protein MnmC of Shigella dysenteriae serotype 1 (strain Sd197).